Consider the following 601-residue polypeptide: DNA ligase (601 aa).

Asp-258 is a binding site for ATP. Catalysis depends on Lys-260, which acts as the N6-AMP-lysine intermediate. Residues Arg-265, Arg-280, Glu-310, Phe-350, Arg-427, and Lys-433 each contribute to the ATP site. A disordered region spans residues 568–601; it reads DKSPEDATTTDEILEMYNKQPKKKIESPPIDESV.

It belongs to the ATP-dependent DNA ligase family. Mg(2+) serves as cofactor.

The enzyme catalyses ATP + (deoxyribonucleotide)n-3'-hydroxyl + 5'-phospho-(deoxyribonucleotide)m = (deoxyribonucleotide)n+m + AMP + diphosphate.. Its function is as follows. DNA ligase that seals nicks in double-stranded DNA during DNA replication, DNA recombination and DNA repair. The polypeptide is DNA ligase (Saccharolobus islandicus (strain Y.N.15.51 / Yellowstone #2) (Sulfolobus islandicus)).